The sequence spans 229 residues: Heptaprenylglyceryl phosphate synthase (229 aa).

Lys12 is a sn-glycerol 1-phosphate binding site. 2 residues coordinate Mg(2+): Asp14 and Thr40. Sn-glycerol 1-phosphate contacts are provided by residues 159-164, Gly189, and 209-210; these read YIEYSG and GN.

Belongs to the GGGP/HepGP synthase family. Group I subfamily. Homodimer. Requires Mg(2+) as cofactor.

The enzyme catalyses sn-glycerol 1-phosphate + all-trans-heptaprenyl diphosphate = 3-heptaprenyl-sn-glycero-1-phosphate + diphosphate. The protein operates within membrane lipid metabolism; glycerophospholipid metabolism. Its function is as follows. Prenyltransferase that catalyzes in vivo the transfer of the heptaprenyl moiety of heptaprenyl pyrophosphate (HepPP; 35 carbon atoms) to the C3 hydroxyl of sn-glycerol-1-phosphate (G1P), producing heptaprenylglyceryl phosphate (HepGP). This reaction is an ether-bond-formation step in the biosynthesis of archaea-type G1P-based membrane lipids found in Bacillales. This chain is Heptaprenylglyceryl phosphate synthase, found in Staphylococcus carnosus (strain TM300).